Here is a 620-residue protein sequence, read N- to C-terminus: MRRSEVLAEESIVCLQKALNHLREIWELIGIPEDQRLQRTEVVKKHIKELLDMMIAEEESLKERLIKSISVCQKELNTLCSELHVEPFQEEGETTILQLEKDLRTQVELMRKQKKERKQELKLLQEQDQELCEILCMPHYDIDSASVPSLEELNQFRQHVTTLRETKASRREEFVSIKRQIILCMEALDHTPDTSFERDVVCEDEDAFCLSLENIATLQKLLRQLEMQKSQNEAVCEGLRTQIRELWDRLQIPEEEREAVATIMSGSKAKVRKALQLEVDRLEELKMQNMKKVIEAIRVELVQYWDQCFYSQEQRQAFAPFCAEDYTESLLQLHDAEIVRLKNYYEVHKELFEGVQKWEETWRLFLEFERKASDPNRFTNRGGNLLKEEKQRAKLQKMLPKLEEELKARIELWEQEHSKAFMVNGQKFMEYVAEQWEMHRLEKERAKQERQLKNKKQTETEMLYGSAPRTPSKRRGLAPNTPGKARKLNTTTMSNATANSSIRPIFGGTVYHSPVSRLPPSGSKPVAASTCSGKKTPRTGRHGANKENLELNGSILSGGYPGSAPLQRNFSINSVASTYSEFAKDPSLSDSSTVGLQRELSKASKSDATSGILNSTNIQS.

Residues 1–303 (MRRSEVLAEE…IEAIRVELVQ (303 aa)) are required for the interaction with KIF4A. A dimerization region spans residues 1 to 341 (MRRSEVLAEE…QLHDAEIVRL (341 aa)). 3 coiled-coil regions span residues 96–133 (ILQL…ELCE), 211–304 (SLEN…LVQY), and 383–463 (GNLL…TEML). The interval 342-466 (KNYYEVHKEL…QTETEMLYGS (125 aa)) is spectrin-fold. Over residues 446–459 (AKQERQLKNKKQTE) the composition is skewed to basic and acidic residues. A disordered region spans residues 446–488 (AKQERQLKNKKQTETEMLYGSAPRTPSKRRGLAPNTPGKARKL). The interval 467–620 (APRTPSKRRG…GILNSTNIQS (154 aa)) is unstructured, Arg/Lys rich. Thr-470 and Thr-481 each carry phosphothreonine; by CDK1. Residues Ser-513, Arg-541, and Ser-571 each carry the phosphoserine modification. The tract at residues 517-545 (RLPPSGSKPVAASTCSGKKTPRTGRHGAN) is disordered. Thr-578 is modified (phosphothreonine). The segment at 600–620 (LSKASKSDATSGILNSTNIQS) is disordered. Residues 606–620 (SDATSGILNSTNIQS) show a composition bias toward polar residues. Position 616 is a phosphothreonine; by PLK1 (Thr-616).

Belongs to the MAP65/ASE1 family. As to quaternary structure, homodimer. Interacts with the C-terminal Rho-GAP domain and the basic region of RACGAP1. The interaction with RACGAP1 inhibits its GAP activity towards CDC42 in vitro, which may be required for maintaining normal spindle morphology. Interacts (via N-terminus) with the C-terminus of CENPE (via C-terminus); the interaction occurs during late mitosis. Interacts (via N-terminus) with KIF4A (via C-terminus); the interaction is required for the progression of mitosis. Interacts (via N-terminus) with KIF23 (via C-terminus); the interaction occurs during late mitosis. Interacts with KIF14 and KIF20A. Interacts with PLK1. Interacts with KIF20B. Interacts with CCDC66. Phosphorylation by CDK1 in early mitosis holds PRC1 in an inactive monomeric state, during the metaphase to anaphase transition, PRC1 is dephosphorylated, promoting interaction with KIF4A, which then translocates PRC1 along mitotic spindles to the plus ends of antiparallel interdigitating microtubules. Dephosphorylation also promotes MT-bundling activity by allowing dimerization. Phosphorylation by CDK1 prevents PLK1-binding: upon degradation of CDK1 at anaphase and dephosphorylation, it is then phosphorylated by PLK1, leading to cytokinesis. In terms of tissue distribution, overexpressed in bladder cancer cells.

Its subcellular location is the nucleus. It is found in the cytoplasm. It localises to the cytoskeleton. The protein localises to the spindle pole. The protein resides in the midbody. Its subcellular location is the chromosome. Key regulator of cytokinesis that cross-links antiparrallel microtubules at an average distance of 35 nM. Essential for controlling the spatiotemporal formation of the midzone and successful cytokinesis. Required for KIF14 localization to the central spindle and midbody. Required to recruit PLK1 to the spindle. Stimulates PLK1 phosphorylation of RACGAP1 to allow recruitment of ECT2 to the central spindle. Acts as an oncogene for promoting bladder cancer cells proliferation, apoptosis inhibition and carcinogenic progression. The protein is Protein regulator of cytokinesis 1 of Homo sapiens (Human).